We begin with the raw amino-acid sequence, 381 residues long: MAIFIRKTHPLLKIMNHALVDLPAPSNISLWWNFGSLLGLCLIIQILTGLFLAMHYTADVSMAFSSVVHICRDVNYGWLIRNIHANGASLFFICVYLHIARGLYYGSYLYKETWNIGVILLFLLMATAFVGYVLPWGQMSFWGATVITNLLSAFPYIGNTLVQWIWGGFSVDNATLTRFFAFHFLLPFLILALTIIHLLFLHETGSNNPLGINSDADKISFHPYFSYKDLLGFFVMIFFLTTLALFMPNLLGDAENFIPANPLVTPPHIKPEWYFLFAYAILRSIPNKLGGVLALLFSIFILMLVPLLHTSKQRSNIFRPLTQIFFWLLVANSIILTWIGGQPVEQPFITVGQVASISYFSLFLIIMPFASWCENKILSLN.

Helical transmembrane passes span 34 to 54 (FGSL…FLAM), 78 to 99 (WLIR…YLHI), 114 to 134 (WNIG…GYVL), and 179 to 199 (FFAF…IHLL). Positions 84 and 98 each coordinate heme b. Heme b contacts are provided by His183 and His197. Residue His202 coordinates a ubiquinone. 4 helical membrane-spanning segments follow: residues 227–247 (YKDL…ALFM), 289–309 (LGGV…PLLH), 321–341 (LTQI…WIGG), and 348–368 (FITV…IIMP).

It belongs to the cytochrome b family. The cytochrome bc1 complex contains 3 respiratory subunits (MT-CYB, CYC1 and UQCRFS1), 2 core proteins (UQCRC1 and UQCRC2) and probably 6 low-molecular weight proteins. Requires heme b as cofactor.

Its subcellular location is the mitochondrion inner membrane. In terms of biological role, component of the ubiquinol-cytochrome c reductase complex (complex III or cytochrome b-c1 complex) that is part of the mitochondrial respiratory chain. The b-c1 complex mediates electron transfer from ubiquinol to cytochrome c. Contributes to the generation of a proton gradient across the mitochondrial membrane that is then used for ATP synthesis. The sequence is that of Cytochrome b (mt-cyb) from Sphyrna tiburo vespertina (Pacific bonnethead shark).